Here is a 23-residue protein sequence, read N- to C-terminus: Basic phospholipase A2 homolog Vur-S49 analog (23 aa).

The interval 1 to 23 is disordered; sequence SVLEIGLMLQEETEKNPKTSYSI.

In terms of processing, contains 7 disulfide bonds. As to expression, expressed by the venom gland.

The protein resides in the secreted. This Vipera renardi (Steppe viper) protein is Basic phospholipase A2 homolog Vur-S49 analog.